We begin with the raw amino-acid sequence, 153 residues long: Fimbrial protein EcpC (153 aa).

A propeptide spans 1–8 (leader sequence); the sequence is MLKQVQKG. The residue at position 9 (F9) is an N-methylphenylalanine. Residues 9 to 29 form a helical membrane-spanning segment; the sequence is FTLIELMIVIAIIGILAAIAL. A disulfide bridge links C130 with C143.

The protein belongs to the N-Me-Phe pilin family.

Its subcellular location is the fimbrium. The protein resides in the membrane. The sequence is that of Fimbrial protein EcpC (ecpC) from Eikenella corrodens.